The following is an 89-amino-acid chain: Small ribosomal subunit protein uS15 (89 aa).

The protein belongs to the universal ribosomal protein uS15 family. Part of the 30S ribosomal subunit. Forms a bridge to the 50S subunit in the 70S ribosome, contacting the 23S rRNA.

Functionally, one of the primary rRNA binding proteins, it binds directly to 16S rRNA where it helps nucleate assembly of the platform of the 30S subunit by binding and bridging several RNA helices of the 16S rRNA. Its function is as follows. Forms an intersubunit bridge (bridge B4) with the 23S rRNA of the 50S subunit in the ribosome. The chain is Small ribosomal subunit protein uS15 from Shewanella woodyi (strain ATCC 51908 / MS32).